The chain runs to 60 residues: Large ribosomal subunit protein bL32 (60 aa).

A disordered region spans residues 1–23 (MAVPRNRHSNARKNIRRSHHAKK).

The protein belongs to the bacterial ribosomal protein bL32 family.

This Chlamydia caviae (strain ATCC VR-813 / DSM 19441 / 03DC25 / GPIC) (Chlamydophila caviae) protein is Large ribosomal subunit protein bL32.